A 1307-amino-acid chain; its full sequence is Contactin-associated protein like 5-3 (1307 aa).

The N-terminal stretch at 1–24 (MDFVPRLNSVLTLVLSGLWHFGLT) is a signal peptide. Residues 25–1238 (ATNCDNCDDP…PLTNAVLSDS (1214 aa)) lie on the Extracellular side of the membrane. Residues 31 to 175 (CDDPLASFLS…IGMRMEVYGC (145 aa)) form the F5/8 type C domain. A disulfide bond links Cys-31 and Cys-175. Laminin G-like domains lie at 181–361 (VADF…TFSC) and 368–545 (PITF…IDLC). N-linked (GlcNAc...) asparagine glycosylation is present at Asn-283. Cys-330 and Cys-361 are disulfide-bonded. Asn-497 carries an N-linked (GlcNAc...) asparagine glycan. 4 disulfides stabilise this stretch: Cys-513–Cys-545, Cys-551–Cys-562, Cys-556–Cys-571, and Cys-573–Cys-583. Positions 547 to 584 (IKDRCLPNYCEHGGHCVQTWTTFYCNCSNTGYTGATCH) constitute an EGF-like 1 domain. A Fibrinogen C-terminal domain is found at 585–792 (DSIYEQSCEV…LRCYGDRHFW (208 aa)). N-linked (GlcNAc...) asparagine glycosylation is found at Asn-600, Asn-624, and Asn-637. In terms of domain architecture, Laminin G-like 3 spans 793–958 (NAVSFSTEAS…MVTSGVRPGC (166 aa)). Disulfide bonds link Cys-931-Cys-958, Cys-962-Cys-975, Cys-969-Cys-984, Cys-986-Cys-996, and Cys-1165-Cys-1200. An EGF-like 2 domain is found at 959-997 (PGHCSSYGNNCHNGGKCVEKHNSYSCDCTKSPYEGPFCQ). Residues 1019–1200 (PVSKNTSTSS…VQGSLREFSC (182 aa)) enclose the Laminin G-like 4 domain. The helical transmembrane segment at 1239-1259 (AVIGGVIAVVTFITFCVIGIM) threads the bilayer. Residues 1260-1307 (TRFLYQHKQSHCTSQKKEKEYSENLDSSFRHDIDLQSTTSKCKREYFI) are Cytoplasmic-facing.

This sequence belongs to the neurexin family.

Its subcellular location is the membrane. In terms of biological role, may play a role in the correct development and proper functioning of the peripheral and central nervous system and be involved in cell adhesion and intercellular communication. The sequence is that of Contactin-associated protein like 5-3 (Cntnap5c) from Rattus norvegicus (Rat).